The sequence spans 458 residues: Hepatocyte nuclear factor 3-beta (458 aa).

The segment at 14–93 (DWSSYYAEPE…AGAMAGMSGS (80 aa)) is transactivation domain 1. The Nuclear localization signal signature appears at 106–113 (LSPSLSPL). Threonine 156 is subject to Phosphothreonine; by PKB/AKT1. The fork-head DNA-binding region spans 159–252 (KPPYSYISLI…ENGCYLRRQK (94 aa)). Phosphoserine is present on residues serine 212 and serine 283. Residues 286 to 365 (QLGEAAGSAS…PGLPPEAHLK (80 aa)) form a disordered region. Positions 294-310 (ASETPAGTESPHSSASP) are enriched in polar residues. Phosphothreonine is present on threonine 301. Phosphoserine occurs at positions 303, 306, 307, and 309. Low complexity predominate over residues 339–352 (PGQQQQAAAHLLGP). Residues 361–458 (EAHLKPEHHY…VYSRPIMNSS (98 aa)) are transactivation domain 2. A phosphoserine mark is found at serine 437 and serine 458.

Binds DNA as a monomer. Binds TLE1. Interacts with FOXA1 and FOXA3. Interacts with PRKDC. Interacts with AKT1. Interacts with TET1; this interaction may recruit TET1 to specific genomic loci to mediate their demethylation. Post-translationally, phosphorylation on Thr-156 abolishes binding to target promoters and subsequent transcription activation upon insulin stimulation. As to expression, liver.

The protein localises to the nucleus. Its subcellular location is the cytoplasm. Its function is as follows. Transcription factor that is involved in embryonic development, establishment of tissue-specific gene expression and regulation of gene expression in differentiated tissues. Is thought to act as a 'pioneer' factor opening the compacted chromatin for other proteins through interactions with nucleosomal core histones and thereby replacing linker histones at target enhancer and/or promoter sites. Binds DNA with the consensus sequence 5'-[AC]A[AT]T[AG]TT[GT][AG][CT]T[CT]-3'. In embryonic development is required for notochord formation. Involved in the development of multiple endoderm-derived organ systems such as the liver, pancreas and lungs; FOXA1 and FOXA2 seem to have at least in part redundant roles. Originally described as a transcription activator for a number of liver genes such as AFP, albumin, tyrosine aminotransferase, PEPCK, etc. Interacts with the cis-acting regulatory regions of these genes. Involved in glucose homeostasis; regulates the expression of genes important for glucose sensing in pancreatic beta-cells and glucose homeostasis. Involved in regulation of fat metabolism. Acts synergistically with ONECUT1 to activate transcription of female-specific CYP2C12; the function is inhibited by growth hormone-activated STAT5B. Acts synergistically with HNF4A to activate transcription of APOA1. This chain is Hepatocyte nuclear factor 3-beta (Foxa2), found in Rattus norvegicus (Rat).